A 282-amino-acid polypeptide reads, in one-letter code: Putative hydrolase Bmul_3283/BMULJ_05242 (282 aa).

Positions 124, 126, and 155 each coordinate Mg(2+).

Belongs to the FAH family. Mg(2+) serves as cofactor.

This Burkholderia multivorans (strain ATCC 17616 / 249) protein is Putative hydrolase Bmul_3283/BMULJ_05242.